The sequence spans 763 residues: DNA-binding protein SATB1 (763 aa).

The span at 1–15 (MDHLNEATQGKEHSE) shows a compositional bias: basic and acidic residues. The segment at 1–54 (MDHLNEATQGKEHSEMSNNVSDPKGPPAKIARLEQNGSPLGRGRLGSTGAKMQG) is disordered. Residues 20–40 (VSDPKGPPAKIARLEQNGSPL) carry the Nuclear localization signal motif. Residue Lys51 forms a Glycyl lysine isopeptide (Lys-Gly) (interchain with G-Cter in SUMO2) linkage. Positions 71 to 172 (GTMLPVFCVV…VVTLKIQLHS (102 aa)) constitute a CMP domain. At Lys136 the chain carries N6-acetyllysine. A Protein interaction motif is present at residues 139-143 (PVPLS). The CUTL domain maps to 175-248 (KLEDLPPEQW…WYKHFKKTKD (74 aa)). Phosphoserine is present on Ser185. The tract at residues 224–278 (YYANVSAAKCQEFGRWYKHFKKTKDMMVEMDSLSELSQQGANHVNFGQQPVPGNT) is nuclear matrix targeting sequence (NMTS). Residues 266–296 (HVNFGQQPVPGNTAEQPPSPAQLSHGSQPSV) are compositionally biased toward polar residues. Residues 266–307 (HVNFGQQPVPGNTAEQPPSPAQLSHGSQPSVRTPLPNLHPGL) are disordered. 2 consecutive DNA-binding regions (CUT) follow at residues 361–448 (LEQQ…QDER) and 484–571 (NGKP…EQES). Residues Gln390, 400 to 410 (RTQGLLSEILR), and Asn425 each bind DNA. A compositionally biased stretch (low complexity) spans 591–607 (QIQQQQQQQQQQQQQQQ). The tract at residues 591–649 (QIQQQQQQQQQQQQQQQAPPPPQPQQQPQTGPRLPPRQPTVASPAESDEENRQKTRPRT) is disordered. Position 637 is a phosphoserine (Ser637). Positions 645–704 (TRPRTKISVEALGILQSFIQDVGLYPDEEAIQTLSAQLDLPKYTIIKFFQNQRYYLKHHG) form a DNA-binding region, homeobox. Lys744 participates in a covalent cross-link: Glycyl lysine isopeptide (Lys-Gly) (interchain with G-Cter in SUMO).

The protein belongs to the CUT homeobox family. Interacts with CUX1 (via DNA-binding domains); the interaction inhibits the attachment of both proteins to DNA. Homodimer. Part of the nuclear protein complex gamma-globin promoter and enhancer binding factor (gamma-PE) composed at least of SATB1 and HOXB2. Interaction with CtBP1 when not acetylated stabilizes attachment to DNA and promotes transcription repression. Interacts with PCAF. Interacts with sumoylated PML and HDAC1 via the CMP domain. Interacts also with DYNLT3 and POLR2J2. Binds to EP300. In terms of assembly, (Microbial infection) Interacts (via the CMP domain) with HIV-1 Tat. Post-translationally, sumoylated. Sumoylation promotes cleavage by caspases. In terms of processing, phosphorylated by PKC. Acetylated by PCAF. Phosphorylated form interacts with HDAC1, but unphosphorylated form interacts with PCAF. DNA binding properties are activated by phosphorylation and inactivated by acetylation. In opposition, gene expression is down-regulated by phosphorylation but up-regulated by acetylation. Cleaved at Asp-254 by caspase-3 and caspase-6 during T-cell apoptosis in thymus and during B-cell stimulation. The cleaved forms cannot dimerize and lose transcription regulation function because of impaired DNA and chromatin association. Expressed predominantly in thymus.

The protein localises to the nucleus matrix. The protein resides in the nucleus. It is found in the PML body. In terms of biological role, crucial silencing factor contributing to the initiation of X inactivation mediated by Xist RNA that occurs during embryogenesis and in lymphoma. Binds to DNA at special AT-rich sequences, the consensus SATB1-binding sequence (CSBS), at nuclear matrix- or scaffold-associated regions. Thought to recognize the sugar-phosphate structure of double-stranded DNA. Transcriptional repressor controlling nuclear and viral gene expression in a phosphorylated and acetylated status-dependent manner, by binding to matrix attachment regions (MARs) of DNA and inducing a local chromatin-loop remodeling. Acts as a docking site for several chromatin remodeling enzymes (e.g. PML at the MHC-I locus) and also by recruiting corepressors (HDACs) or coactivators (HATs) directly to promoters and enhancers. Modulates genes that are essential in the maturation of the immune T-cell CD8SP from thymocytes. Required for the switching of fetal globin species, and beta- and gamma-globin genes regulation during erythroid differentiation. Plays a role in chromatin organization and nuclear architecture during apoptosis. Interacts with the unique region (UR) of cytomegalovirus (CMV). Alu-like motifs and SATB1-binding sites provide a unique chromatin context which seems preferentially targeted by the HIV-1 integration machinery. Moreover, HIV-1 Tat may overcome SATB1-mediated repression of IL2 and IL2RA (interleukin) in T-cells by binding to the same domain than HDAC1. Delineates specific epigenetic modifications at target gene loci, directly up-regulating metastasis-associated genes while down-regulating tumor-suppressor genes. Reprograms chromatin organization and the transcription profiles of breast tumors to promote growth and metastasis. Promotes neuronal differentiation of neural stem/progenitor cells in the adult subventricular zone, possibly by positively regulating the expression of NEUROD1. This chain is DNA-binding protein SATB1, found in Homo sapiens (Human).